Consider the following 1481-residue polypeptide: ABC multidrug transporter atrH (1481 aa).

Over residues 1 to 10 the composition is skewed to basic and acidic residues; the sequence is MALPREERSL. 2 disordered regions span residues 1–45 and 61–89; these read MALP…GIEQ and ISQT…SDQF. Residues Asn-19, Asn-76, and Asn-320 are each glycosylated (N-linked (GlcNAc...) asparagine). The ABC transporter 1 domain maps to 134–396; it reads ATVSNVWLKA…FIEMGFDCPE (263 aa). A helical membrane pass occupies residues 507–527; that stretch reads MTLSTVIGNSILALIISSVFY. An N-linked (GlcNAc...) asparagine glycan is attached at Asn-530. 5 helical membrane-spanning segments follow: residues 542-562, 587-607, 616-636, 650-670, and 758-778; these read LLFF…LTLW, LIVD…ILYF, GHFF…SNVF, EVPA…TIPV, and FGIL…ASEL. In terms of domain architecture, ABC transporter 2 spans 838–1081; the sequence is FHWQDVCYDI…LIKYFEDKGS (244 aa). 874 to 881 provides a ligand contact to ATP; that stretch reads GVTGAGKT. Helical transmembrane passes span 1174-1194, 1210-1230, 1249-1269, 1298-1318, 1327-1347, and 1358-1378; these read YIYA…FTFW, IFML…YFAM, AFML…AVPA, LLVL…IAGI, IAQL…SPDV, and ASPF…GAPV. Asn-1395 carries N-linked (GlcNAc...) asparagine glycosylation. Residues 1446–1466 traverse the membrane as a helical segment; the sequence is VGILFVYIVFNTVAAVFLYWL.

This sequence belongs to the ABC transporter superfamily. ABCG family. PDR (TC 3.A.1.205) subfamily.

It localises to the cell membrane. Pleiotropic ABC efflux transporter involved in the basal level of azole susceptibility. This Aspergillus oryzae (strain ATCC 42149 / RIB 40) (Yellow koji mold) protein is ABC multidrug transporter atrH.